The sequence spans 317 residues: MARKKIALIGGGQIGGVLAQLAALRELGDVVMFDIVEGLPQGKMLDIAEVGSVDGFDCNLKGTNSYEDIKGADVVIVTAGLPRKPGMSRDDLIEVNSKIMTSVAEGIKANAPNAFVIVISNPLDAMVTLCQKITGFPYNRVIGQAGVLDSARFKTFIAWELGVSVKDVNAMTLGGHGDDMVPLVRYASVNGIPVMELLEKKYKDKAKAKEVMEAMVKRTRGAGGEVVALLKTGSAFYSPASSAIQMAESILKDQKRVLPTCAHLNGEFGVKGFYVGVPCVLGENGVEQILEFELDAEEQAMMDKSVAAVKELVGSMK.

Residues 10 to 15 and D34 contribute to the NAD(+) site; that span reads GGGQIG. 2 residues coordinate substrate: R83 and R89. NAD(+) is bound by residues N96 and 119–121; that span reads ISN. Residues N121 and R152 each coordinate substrate. Residue H176 is the Proton acceptor of the active site.

This sequence belongs to the LDH/MDH superfamily. MDH type 3 family.

The enzyme catalyses (S)-malate + NAD(+) = oxaloacetate + NADH + H(+). In terms of biological role, catalyzes the reversible oxidation of malate to oxaloacetate. The polypeptide is Malate dehydrogenase (Citrifermentans bemidjiense (strain ATCC BAA-1014 / DSM 16622 / JCM 12645 / Bem) (Geobacter bemidjiensis)).